The sequence spans 453 residues: Autophagy-related protein 21 (453 aa).

One copy of the WD 1 repeat lies at 4-137 (LRFNQDASCC…NDQIFIYDIS (134 aa)). Residues 177-207 (GNELDRIRSKSNNNNDQTNSDNGRSRTYSIN) form a disordered region. A compositionally biased stretch (low complexity) spans 187–198 (SNNNNDQTNSDN). WD repeat units lie at residues 252–347 (NLKP…RTDD) and 419–453 (FDNK…SHFI). The L/FRRG motif motif lies at 310–314 (FRRGS).

It belongs to the WD repeat PROPPIN family.

The protein resides in the cytoplasm. It is found in the membrane. It localises to the vacuole membrane. Required for cytoplasm to vacuole transport (Cvt) vesicles formation and mitophagy. Involved in binding of phosphatidylethanolamine to ATG8 and in recruitment of ATG8 and ATG5 to the pre-autophagosomal structure. Protects ATG8 from ARG4-mediated cleavage. The polypeptide is Autophagy-related protein 21 (ATG21) (Candida glabrata (strain ATCC 2001 / BCRC 20586 / JCM 3761 / NBRC 0622 / NRRL Y-65 / CBS 138) (Yeast)).